The following is a 401-amino-acid chain: Methionyl-tRNA formyltransferase, mitochondrial (401 aa).

The N-terminal 26 residues, 1–26 (MVKMRRITPTRLLFTCRYISNNASPP), are a transit peptide targeting the mitochondrion. (6R)-10-formyltetrahydrofolate is bound by residues 18-20 (YIS) and 66-70 (VVTRS).

This sequence belongs to the Fmt family. Post-translationally, phosphorylated by GCN2 in response to nutrient deprivation. Phosphorylation mediates retention of FMT1 in the cytoplasm.

The protein resides in the mitochondrion. It localises to the mitochondrion matrix. It is found in the cytoplasm. It catalyses the reaction L-methionyl-tRNA(fMet) + (6R)-10-formyltetrahydrofolate = N-formyl-L-methionyl-tRNA(fMet) + (6S)-5,6,7,8-tetrahydrofolate + H(+). In terms of biological role, formylates methionyl-tRNA in mitochondria and the cytoplasm. Responsible for the formylation of the 8 N-terminally formylated (Nt-formylated) mitochondrial matrix proteins that are encoded by mitochondrial DNA. Nt-formylated proteins in the cytoplasm are strongly up-regulated in stationary phase or upon starvation for specific amino acids (His or Lys) and are targeted for degradation by a PSH1 E3 ubiquitin ligase-mediated fMet/N-end rule pathway. Increased Nt-formylation of cytosolic proteins appears to be important for adaptation to these stresses. Stationary phase-degraded Nt-formylated proteins include histone H3-like centromeric protein CSE4, Mediator complex subunit 3 (PGD1) and small ribosomal subunit protein uS8-A (RPS22A). This is Methionyl-tRNA formyltransferase, mitochondrial (FMT1) from Saccharomyces cerevisiae (strain ATCC 204508 / S288c) (Baker's yeast).